Here is a 199-residue protein sequence, read N- to C-terminus: Recombination protein RecR (199 aa).

A C4-type zinc finger spans residues 57–72; sequence CQSCRTYTEESLCPIC. The Toprim domain maps to 81-176; it reads STICVVETPA…VISRIAHGVP (96 aa).

It belongs to the RecR family.

In terms of biological role, may play a role in DNA repair. It seems to be involved in an RecBC-independent recombinational process of DNA repair. It may act with RecF and RecO. In Shewanella sp. (strain MR-4), this protein is Recombination protein RecR.